The primary structure comprises 308 residues: Carbonic anhydrase 4 (308 aa).

An N-terminal signal peptide occupies residues 1–18; it reads MQLLFALLALGALRPLAG. Positions 21 to 281 constitute an Alpha-carbonic anhydrase domain; the sequence is LHWCYEIQAS…LGDRSVFKSQ (261 aa). 2 cysteine pairs are disulfide-bonded: cysteine 24–cysteine 34 and cysteine 44–cysteine 225. Asparagine 31 carries an N-linked (GlcNAc...) asparagine glycan. Catalysis depends on histidine 86, which acts as the Proton donor/acceptor. Positions 113, 115, and 138 each coordinate Zn(2+). An N-linked (GlcNAc...) asparagine glycan is attached at asparagine 192. Position 221-222 (221-222) interacts with substrate; sequence TT. Residue serine 280 is the site of GPI-anchor amidated serine attachment. A propeptide spans 281–308 (removed in mature form); it reads QAAGQLLPLPLPTLLVPTLACVMAGLLR.

Belongs to the alpha-carbonic anhydrase family. As to quaternary structure, interacts with SLC4A4. Requires Zn(2+) as cofactor.

It localises to the cell membrane. It catalyses the reaction hydrogencarbonate + H(+) = CO2 + H2O. Its activity is regulated as follows. Inhibited by acetazolamide. Catalyzes the reversible hydration of carbon dioxide into bicarbonate and protons and thus is essential to maintaining intracellular and extracellular pH. May stimulate the sodium/bicarbonate transporter activity of SLC4A4 that acts in pH homeostasis. It is essential for acid overload removal from the retina and retina epithelium, and acid release in the choriocapillaris in the choroid. In Oryctolagus cuniculus (Rabbit), this protein is Carbonic anhydrase 4 (CA4).